The following is a 144-amino-acid chain: Small ribosomal subunit protein eS19A (144 aa).

The tract at residues 83-102 (VNRGMRPSHHRDGSGSVQRK) is disordered.

The protein belongs to the eukaryotic ribosomal protein eS19 family. Component of the small ribosomal subunit (SSU). Mature yeast ribosomes consist of a small (40S) and a large (60S) subunit. The 40S small subunit contains 1 molecule of ribosomal RNA (18S rRNA) and at least 33 different proteins. The large 60S subunit contains 3 rRNA molecules (25S, 5.8S and 5S rRNA) and at least 46 different proteins.

The protein resides in the cytoplasm. It localises to the nucleus. It is found in the nucleolus. Its function is as follows. Component of the ribosome, a large ribonucleoprotein complex responsible for the synthesis of proteins in the cell. The small ribosomal subunit (SSU) binds messenger RNAs (mRNAs) and translates the encoded message by selecting cognate aminoacyl-transfer RNA (tRNA) molecules. The large subunit (LSU) contains the ribosomal catalytic site termed the peptidyl transferase center (PTC), which catalyzes the formation of peptide bonds, thereby polymerizing the amino acids delivered by tRNAs into a polypeptide chain. The nascent polypeptides leave the ribosome through a tunnel in the LSU and interact with protein factors that function in enzymatic processing, targeting, and the membrane insertion of nascent chains at the exit of the ribosomal tunnel. eS19 is required for proper maturation of the small (40S) ribosomal subunit. Binds to 40S pre-ribosomal particles, probably required after association of NOC4 but before association of ENP1, TSR1 and RIO2 with 20/21S pre-rRNA. This is Small ribosomal subunit protein eS19A (rps1901) from Schizosaccharomyces pombe (strain 972 / ATCC 24843) (Fission yeast).